The primary structure comprises 193 residues: uncharacterized protein (193 aa).

An AMMECR1 domain is found at 1-189 (MDKKEYCYYC…CTYEEYLHNL (189 aa)).

This is an uncharacterized protein from Schizosaccharomyces pombe (strain 972 / ATCC 24843) (Fission yeast).